The following is a 236-amino-acid chain: tRNA (guanine-N(7)-)-methyltransferase (236 aa).

Positions 1-23 (MEADVQRAQQAQLEKGSSVPPWT) are disordered. Residues aspartate 69, glutamate 94, asparagine 121, and aspartate 144 each contribute to the S-adenosyl-L-methionine site. Aspartate 144 is a catalytic residue. Residues lysine 148 and aspartate 180 each coordinate substrate.

Belongs to the class I-like SAM-binding methyltransferase superfamily. TrmB family.

It carries out the reaction guanosine(46) in tRNA + S-adenosyl-L-methionine = N(7)-methylguanosine(46) in tRNA + S-adenosyl-L-homocysteine. It participates in tRNA modification; N(7)-methylguanine-tRNA biosynthesis. Functionally, catalyzes the formation of N(7)-methylguanine at position 46 (m7G46) in tRNA. The chain is tRNA (guanine-N(7)-)-methyltransferase from Synechococcus sp. (strain JA-3-3Ab) (Cyanobacteria bacterium Yellowstone A-Prime).